The sequence spans 354 residues: Serum paraoxonase/arylesterase 2 (354 aa).

Residues Cys42 and Cys352 are joined by a disulfide bond. Ca(2+)-binding residues include Glu53 and Asp54. His114 (proton acceptor) is an active-site residue. Ile116, Asn167, Asp168, and Asn223 together coordinate Ca(2+). N-linked (GlcNAc...) asparagine glycosylation is present at Asn254. Ca(2+) contacts are provided by Asp268 and Asn269. N-linked (GlcNAc...) asparagine glycans are attached at residues Asn269 and Asn323.

The protein belongs to the paraoxonase family. In terms of assembly, homotrimer. It depends on Ca(2+) as a cofactor. Post-translationally, glycosylated. The signal sequence is not cleaved.

It is found in the membrane. The catalysed reaction is a phenyl acetate + H2O = a phenol + acetate + H(+). It catalyses the reaction an N-acyl-L-homoserine lactone + H2O = an N-acyl-L-homoserine + H(+). In terms of biological role, capable of hydrolyzing lactones and a number of aromatic carboxylic acid esters. This is Serum paraoxonase/arylesterase 2 (PON2) from Bos taurus (Bovine).